The following is a 79-amino-acid chain: Large ribosomal subunit protein bL31 (79 aa).

Zn(2+)-binding residues include Cys16, Cys18, Cys37, and Cys40.

This sequence belongs to the bacterial ribosomal protein bL31 family. Type A subfamily. In terms of assembly, part of the 50S ribosomal subunit. The cofactor is Zn(2+).

Binds the 23S rRNA. In Coxiella burnetii (strain CbuG_Q212) (Coxiella burnetii (strain Q212)), this protein is Large ribosomal subunit protein bL31.